The chain runs to 625 residues: Basic helix-loop-helix ARNT-like protein 1 (625 aa).

Positions 1-60 are disordered; sequence MADQRMDISSTISDFMSPGPTDLLSSSLGTSGVDCNRKRKGSSTDYQESMDTDKDDPHGR. Position 17 is a phosphoserine; by GSK3-beta (Ser17). Low complexity predominate over residues 17–32; the sequence is SPGPTDLLSSSLGTSG. Thr21 carries the post-translational modification Phosphothreonine; by GSK3-beta. The Nuclear localization signal signature appears at 36–41; the sequence is NRKRKG. The segment covering 51–60 has biased composition (basic and acidic residues); the sequence is DTDKDDPHGR. Residues 72–125 form the bHLH domain; it reads NAREAHSQIEKRRRDKMNSFIDELASLVPTCNAMSRKLDKLTVLRMAVQHMKTL. At Ser78 the chain carries Phosphoserine. Residue Ser90 is modified to Phosphoserine; by CK2. Positions 142 to 152 match the Nuclear export signal 1 motif; it reads LSDDELKHLIL. Residues 143 to 215 form the PAS 1 domain; the sequence is SDDELKHLIL…EQLSSSDTAP (73 aa). A Glycyl lysine isopeptide (Lys-Gly) (interchain with G-Cter in SUMO2 and SUMO3) cross-link involves residue Lys252. A Glycyl lysine isopeptide (Lys-Gly) (interchain with G-Cter in SUMO); alternate cross-link involves residue Lys259. Lys259 participates in a covalent cross-link: Glycyl lysine isopeptide (Lys-Gly) (interchain with G-Cter in SUMO2); alternate. The region spanning 325 to 395 is the PAS 2 domain; the sequence is PQPVNGEIRV…ECHRQVLQTR (71 aa). Positions 360 to 368 match the Nuclear export signal 2 motif; that stretch reads LAYLPQELL. Residues 400 to 443 form the PAC domain; sequence TNCYKFKIKDGSFITLRSRWFSFMNPWTKEVEYIVSTNTVVLAN. 2 disordered regions span residues 454–491 and 510–594; these read QLTA…RAGA and GSSP…SPSN. An interaction with CIART region spans residues 507 to 587; it reads RIRGSSPSSC…IGIDMIDNDQ (81 aa). Positions 510 to 520 are enriched in low complexity; that stretch reads GSSPSSCGSSP. Lys537 carries the post-translational modification N6-acetyllysine.

As to quaternary structure, component of the circadian clock oscillator which includes the CRY1/2 proteins, CLOCK or NPAS2, BMAL1 or BMAL2, CSNK1D and/or CSNK1E, TIMELESS and the PER1/2/3 proteins. Forms a heterodimer with CLOCK. The CLOCK-BMAL1 heterodimer is required for E-box-dependent transactivation, for CLOCK nuclear translocation and degradation, and, for phosphorylation of both CLOCK and BMAL1. Part of a nuclear complex which also includes RACK1 and PRKCA; RACK1 and PRKCA are recruited to the complex in a circadian manner. Interacts with NPAS2. Interacts with EZH2. Interacts with SUMO3. Interacts with SIRT1. Interacts with AHR. Interacts with ID1, ID2 and ID3. Interacts with DDX4. Interacts with OGT. Interacts with EED and SUZ12. Interacts with MTA1. Interacts with CIART. Interacts with HSP90. Interacts with KAT2B and EP300. Interacts with BHLHE40/DEC1 and BHLHE41/DEC2. Interacts with RELB and the interaction is enhanced in the presence of CLOCK. Interacts with PER1, PER2, CRY1 and CRY2 and this interaction requires a translocation to the nucleus. Interaction of the CLOCK-BMAL1 heterodimer with PER or CRY inhibits transcription activation. Interaction of the CLOCK-BMAL1 with CRY1 is independent of DNA but with PER2 is off DNA. The CLOCK-BMAL1 heterodimer interacts with GSK3B. Interacts with KDM5A. Interacts with KMT2A; in a circadian manner. Interacts with UBE3A. Interacts with PRKCG. Interacts with MAGEL2. Interacts with NCOA2. Interacts with THRAP3. The CLOCK-BMAL1 heterodimer interacts with PASD1. Interacts with PASD1. Interacts with USP9X. Interacts with PIWIL2 (via PIWI domain). Interacts with HDAC3. Interacts with HNF4A. Ubiquitinated, leading to its proteasomal degradation. Deubiquitinated by USP9X. In terms of processing, O-glycosylated; contains O-GlcNAc. O-glycosylation by OGT prevents protein degradation by inhibiting ubiquitination. It also stabilizes the CLOCK-BMAL1 heterodimer thereby increasing CLOCK-BMAL1-mediated transcription of genes in the negative loop of the circadian clock such as PER1/2/3 and CRY1/2. Post-translationally, acetylated on Lys-537 by CLOCK during the repression phase of the circadian cycle. Acetylation facilitates recruitment of CRY1 protein and initiates the repression phase of the circadian cycle. Acetylated at Lys-537 by KAT5 during the activation phase of the cycle, leading to recruitment of the positive transcription elongation factor b (P-TEFb) and BRD4, followed by productive elongation of circadian transcripts. Deacetylated by SIRT1, which may result in decreased protein stability. Phosphorylated upon dimerization with CLOCK. Phosphorylation enhances the transcriptional activity, alters the subcellular localization and decreases the stability of the CLOCK-BMAL1 heterodimer by promoting its degradation. Phosphorylation shows circadian variations in the liver with a peak between CT10 to CT14. Phosphorylation at Ser-90 by CK2 is essential for its nuclear localization, its interaction with CLOCK and controls CLOCK nuclear entry. Dephosphorylation at Ser-78 is important for dimerization with CLOCK and transcriptional activity. In terms of processing, sumoylated on Lys-259 upon dimerization with CLOCK. Predominantly conjugated to poly-SUMO2/3 rather than SUMO1 and the level of these conjugates undergo rhythmic variation, peaking at CT9-CT12. Sumoylation localizes it exclusively to the PML body and promotes its ubiquitination in the PML body, ubiquitin-dependent proteasomal degradation and the transcriptional activity of the CLOCK-BMAL1 heterodimer. Post-translationally, undergoes lysosome-mediated degradation in a time-dependent manner in the liver.

The protein resides in the nucleus. It is found in the cytoplasm. Its subcellular location is the PML body. Transcriptional activator which forms a core component of the circadian clock. The circadian clock, an internal time-keeping system, regulates various physiological processes through the generation of approximately 24 hour circadian rhythms in gene expression, which are translated into rhythms in metabolism and behavior. It is derived from the Latin roots 'circa' (about) and 'diem' (day) and acts as an important regulator of a wide array of physiological functions including metabolism, sleep, body temperature, blood pressure, endocrine, immune, cardiovascular, and renal function. Consists of two major components: the central clock, residing in the suprachiasmatic nucleus (SCN) of the brain, and the peripheral clocks that are present in nearly every tissue and organ system. Both the central and peripheral clocks can be reset by environmental cues, also known as Zeitgebers (German for 'timegivers'). The predominant Zeitgeber for the central clock is light, which is sensed by retina and signals directly to the SCN. The central clock entrains the peripheral clocks through neuronal and hormonal signals, body temperature and feeding-related cues, aligning all clocks with the external light/dark cycle. Circadian rhythms allow an organism to achieve temporal homeostasis with its environment at the molecular level by regulating gene expression to create a peak of protein expression once every 24 hours to control when a particular physiological process is most active with respect to the solar day. Transcription and translation of core clock components (CLOCK, NPAS2, BMAL1, BMAL2, PER1, PER2, PER3, CRY1 and CRY2) plays a critical role in rhythm generation, whereas delays imposed by post-translational modifications (PTMs) are important for determining the period (tau) of the rhythms (tau refers to the period of a rhythm and is the length, in time, of one complete cycle). A diurnal rhythm is synchronized with the day/night cycle, while the ultradian and infradian rhythms have a period shorter and longer than 24 hours, respectively. Disruptions in the circadian rhythms contribute to the pathology of cardiovascular diseases, cancer, metabolic syndromes and aging. A transcription/translation feedback loop (TTFL) forms the core of the molecular circadian clock mechanism. Transcription factors, CLOCK or NPAS2 and BMAL1 or BMAL2, form the positive limb of the feedback loop, act in the form of a heterodimer and activate the transcription of core clock genes and clock-controlled genes (involved in key metabolic processes), harboring E-box elements (5'-CACGTG-3') within their promoters. The core clock genes: PER1/2/3 and CRY1/2 which are transcriptional repressors form the negative limb of the feedback loop and interact with the CLOCK|NPAS2-BMAL1|BMAL2 heterodimer inhibiting its activity and thereby negatively regulating their own expression. This heterodimer also activates nuclear receptors NR1D1/2 and RORA/B/G, which form a second feedback loop and which activate and repress BMAL1 transcription, respectively. BMAL1 positively regulates myogenesis and negatively regulates adipogenesis via the transcriptional control of the genes of the canonical Wnt signaling pathway. Plays a role in normal pancreatic beta-cell function; regulates glucose-stimulated insulin secretion via the regulation of antioxidant genes NFE2L2/NRF2 and its targets SESN2, PRDX3, CCLC and CCLM. Negatively regulates the mTORC1 signaling pathway; regulates the expression of MTOR and DEPTOR. Controls diurnal oscillations of Ly6C inflammatory monocytes; rhythmic recruitment of the PRC2 complex imparts diurnal variation to chemokine expression that is necessary to sustain Ly6C monocyte rhythms. Regulates the expression of HSD3B2, STAR, PTGS2, CYP11A1, CYP19A1 and LHCGR in the ovary and also the genes involved in hair growth. Plays an important role in adult hippocampal neurogenesis by regulating the timely entry of neural stem/progenitor cells (NSPCs) into the cell cycle and the number of cell divisions that take place prior to cell-cycle exit. Regulates the circadian expression of CIART and KLF11. The CLOCK-BMAL1 heterodimer regulates the circadian expression of SERPINE1/PAI1, VWF, B3, CCRN4L/NOC, NAMPT, DBP, MYOD1, PPARGC1A, PPARGC1B, SIRT1, GYS2, F7, NGFR, GNRHR, BHLHE40/DEC1, ATF4, MTA1, KLF10 and also genes implicated in glucose and lipid metabolism. Promotes rhythmic chromatin opening, regulating the DNA accessibility of other transcription factors. The NPAS2-BMAL1 heterodimer positively regulates the expression of MAOA, F7 and LDHA and modulates the circadian rhythm of daytime contrast sensitivity by regulating the rhythmic expression of adenylate cyclase type 1 (ADCY1) in the retina. The preferred binding motif for the CLOCK-BMAL1 heterodimer is 5'-CACGTGA-3', which contains a flanking adenine nucleotide at the 3-prime end of the canonical 6-nucleotide E-box sequence. CLOCK specifically binds to the half-site 5'-CAC-3', while BMAL1 binds to the half-site 5'-GTGA-3'. The CLOCK-BMAL1 heterodimer also recognizes the non-canonical E-box motifs 5'-AACGTGA-3' and 5'-CATGTGA-3'. Essential for the rhythmic interaction of CLOCK with ASS1 and plays a critical role in positively regulating CLOCK-mediated acetylation of ASS1. Plays a role in protecting against lethal sepsis by limiting the expression of immune checkpoint protein CD274 in macrophages in a PKM2-dependent manner. Regulates the diurnal rhythms of skeletal muscle metabolism via transcriptional activation of genes promoting triglyceride synthesis (DGAT2) and metabolic efficiency (COQ10B). The polypeptide is Basic helix-loop-helix ARNT-like protein 1 (BMAL1) (Pongo abelii (Sumatran orangutan)).